The chain runs to 150 residues: Auxin-binding protein 5 (150 aa).

A signal peptide spans 1–41 (MVRRRPATGAAQRPQLAAVGRGLLLASVLAAAASSLPVAES). Positions 98, 100, and 104 each coordinate Zn(2+). N-linked (GlcNAc...) asparagine glycosylation is present at Asn136. His147 contacts Zn(2+).

As to quaternary structure, homodimer.

It localises to the endoplasmic reticulum lumen. This is probably a receptor for the plant hormone auxin. This chain is Auxin-binding protein 5 (ABP5), found in Zea mays (Maize).